A 515-amino-acid polypeptide reads, in one-letter code: Probable cytosol aminopeptidase (515 aa).

Residues Lys277 and Asp282 each contribute to the Mn(2+) site. Lys289 is a catalytic residue. The Mn(2+) site is built by Asp300, Asp359, and Glu361. Arg363 is an active-site residue.

Belongs to the peptidase M17 family. Mn(2+) is required as a cofactor.

It localises to the cytoplasm. The catalysed reaction is Release of an N-terminal amino acid, Xaa-|-Yaa-, in which Xaa is preferably Leu, but may be other amino acids including Pro although not Arg or Lys, and Yaa may be Pro. Amino acid amides and methyl esters are also readily hydrolyzed, but rates on arylamides are exceedingly low.. The enzyme catalyses Release of an N-terminal amino acid, preferentially leucine, but not glutamic or aspartic acids.. Presumably involved in the processing and regular turnover of intracellular proteins. Catalyzes the removal of unsubstituted N-terminal amino acids from various peptides. The protein is Probable cytosol aminopeptidase of Streptomyces griseus subsp. griseus (strain JCM 4626 / CBS 651.72 / NBRC 13350 / KCC S-0626 / ISP 5235).